The chain runs to 2249 residues: Outer membrane protein A (2249 aa).

The first 28 residues, 1–28, serve as a signal peptide directing secretion; sequence MANISPKLFKKAIQQGLKAALFTTSTAA. The Type I 1 repeat unit spans residues 212–286; that stretch reads IGNTNALATV…NGALSQVTGD (75 aa). The tract at residues 212-1180 is 14 X approximate tandem repeats; that stretch reads IGNTNALATV…ALATVNVGAG (969 aa). Type II repeat units follow at residues 287–358 and 359–430; these read IGNT…VTGN and VGNT…VTGD. A Type I 2 repeat occupies 431–505; sequence IGNTNALATV…NGALSQVTGN (75 aa). One copy of the Type II 3 repeat lies at 506-577; that stretch reads IGNTNSLATI…FTGNSTVTGD (72 aa). Residues 578–652 form a Type I 3 repeat; the sequence is IGNTNSLATI…NGALSQVTGD (75 aa). The Type II 4 repeat unit spans residues 653–724; it reads IGNTNSLATI…FTGNSTVTGD (72 aa). Type I repeat units lie at residues 725–799, 800–874, and 875–949; these read IGNT…VTGD. Type II repeat units lie at residues 950–1021, 1022–1093, and 1094–1165; these read IGNT…VTGN, VGNT…VTGN, and VGNT…VTGD. One copy of the Type I 7; truncated repeat lies at 1166 to 1180; it reads IGNTNALATVNVGAG. Positions 1962-2249 constitute an Autotransporter domain; that stretch reads DMDAKFGAWI…QGSVKVRVNF (288 aa).

Belongs to the rickettsiae OmpA/OmpB family. In terms of processing, glycosylated.

The protein resides in the periplasm. Its subcellular location is the secreted. The protein localises to the cell surface. It localises to the cell outer membrane. Functionally, elicits protective immunity. The sequence is that of Outer membrane protein A (ompA) from Rickettsia rickettsii.